A 544-amino-acid polypeptide reads, in one-letter code: Methionine--tRNA ligase (544 aa).

Positions 10–20 (PYANGSLHLGH) match the 'HIGH' region motif. Residues cysteine 141, cysteine 144, cysteine 153, and cysteine 156 each coordinate Zn(2+). A 'KMSKS' region motif is present at residues 329–333 (KLSTS). Threonine 332 is an ATP binding site.

This sequence belongs to the class-I aminoacyl-tRNA synthetase family. MetG type 1 subfamily. Monomer. Zn(2+) serves as cofactor.

It is found in the cytoplasm. It catalyses the reaction tRNA(Met) + L-methionine + ATP = L-methionyl-tRNA(Met) + AMP + diphosphate. Functionally, is required not only for elongation of protein synthesis but also for the initiation of all mRNA translation through initiator tRNA(fMet) aminoacylation. This is Methionine--tRNA ligase from Bacillus cereus (strain B4264).